A 386-amino-acid polypeptide reads, in one-letter code: MSEYSIFTSESVSEGHPDKMADQISDAILDAIIKDDPNARVAVETLVKTGMAVIAGEVRTNTYVDLEDIVRSVILDIGYNSSDVGFDGASCAVLNAIGKQSGDIAMGVDEASEKDLGAGDQGLMFGYATNETDVLMPAPIYYSHRLVERQAYLRKNSILPWLRPDAKSQVTLRYENGKPVAVEAVVLSTQHTPDVKQSDIREAVMEEIIKHVLPEEWLHSNTQYHINPTGQFIIGGPVGDCGLTGRKIIVDTYGGMARHGGGAFSGKDPSKVDRSAAYAGRYVAKNIVASGLAAKCEIQVSYAIGVSEPTSISVNTFGTGKISDDKIATLVREHFDLRPRGLIDMLDLKRPIYRPTASYGHFGRTGDSFSWERTDKADALRAAAGI.

An ATP-binding site is contributed by His-16. Asp-18 provides a ligand contact to Mg(2+). Residue Glu-44 participates in K(+) binding. Residues Glu-57 and Gln-100 each contribute to the L-methionine site. The interval 100–110 (QSGDIAMGVDE) is flexible loop. Residues 165–167 (DAK), Asp-240, 246–247 (RK), Ala-263, and Lys-267 contribute to the ATP site. Asp-240 is a binding site for L-methionine. Position 271 (Lys-271) interacts with L-methionine.

The protein belongs to the AdoMet synthase family. Homotetramer; dimer of dimers. Mg(2+) serves as cofactor. Requires K(+) as cofactor.

Its subcellular location is the cytoplasm. It catalyses the reaction L-methionine + ATP + H2O = S-adenosyl-L-methionine + phosphate + diphosphate. It participates in amino-acid biosynthesis; S-adenosyl-L-methionine biosynthesis; S-adenosyl-L-methionine from L-methionine: step 1/1. Its function is as follows. Catalyzes the formation of S-adenosylmethionine (AdoMet) from methionine and ATP. The overall synthetic reaction is composed of two sequential steps, AdoMet formation and the subsequent tripolyphosphate hydrolysis which occurs prior to release of AdoMet from the enzyme. The polypeptide is S-adenosylmethionine synthase (Hahella chejuensis (strain KCTC 2396)).